A 201-amino-acid chain; its full sequence is Recombination protein RecR (201 aa).

Residues 60-75 (CSCCGNVDTIDPCTVC) form a C4-type zinc finger. In terms of domain architecture, Toprim spans 83–178 (SMIIVVEDVS…KTTRLAHGVP (96 aa)).

This sequence belongs to the RecR family.

May play a role in DNA repair. It seems to be involved in an RecBC-independent recombinational process of DNA repair. It may act with RecF and RecO. In Allorhizobium ampelinum (strain ATCC BAA-846 / DSM 112012 / S4) (Agrobacterium vitis (strain S4)), this protein is Recombination protein RecR.